A 71-amino-acid polypeptide reads, in one-letter code: Exodeoxyribonuclease 7 small subunit (71 aa).

The protein belongs to the XseB family. In terms of assembly, heterooligomer composed of large and small subunits.

The protein resides in the cytoplasm. The catalysed reaction is Exonucleolytic cleavage in either 5'- to 3'- or 3'- to 5'-direction to yield nucleoside 5'-phosphates.. In terms of biological role, bidirectionally degrades single-stranded DNA into large acid-insoluble oligonucleotides, which are then degraded further into small acid-soluble oligonucleotides. This is Exodeoxyribonuclease 7 small subunit from Streptococcus pyogenes serotype M1.